A 432-amino-acid polypeptide reads, in one-letter code: Adenylosuccinate synthetase (432 aa).

GTP contacts are provided by residues 12 to 18 (GDEGKGK) and 40 to 42 (GHT). Aspartate 13 acts as the Proton acceptor in catalysis. Mg(2+)-binding residues include aspartate 13 and glycine 40. IMP contacts are provided by residues 13–16 (DEGK), 38–41 (NAGH), threonine 130, arginine 144, glutamine 226, threonine 241, and arginine 305. Residue histidine 41 is the Proton donor of the active site. 301–307 (STTGRSR) is a substrate binding site. GTP contacts are provided by residues arginine 307, 333–335 (KLD), and 415–417 (SVG).

It belongs to the adenylosuccinate synthetase family. Homodimer. Mg(2+) serves as cofactor.

The protein resides in the cytoplasm. The catalysed reaction is IMP + L-aspartate + GTP = N(6)-(1,2-dicarboxyethyl)-AMP + GDP + phosphate + 2 H(+). It participates in purine metabolism; AMP biosynthesis via de novo pathway; AMP from IMP: step 1/2. Plays an important role in the de novo pathway of purine nucleotide biosynthesis. Catalyzes the first committed step in the biosynthesis of AMP from IMP. The polypeptide is Adenylosuccinate synthetase (Bdellovibrio bacteriovorus (strain ATCC 15356 / DSM 50701 / NCIMB 9529 / HD100)).